Consider the following 130-residue polypeptide: Large ribosomal subunit protein bL12 (130 aa).

Belongs to the bacterial ribosomal protein bL12 family. Homodimer. Part of the ribosomal stalk of the 50S ribosomal subunit. Forms a multimeric L10(L12)X complex, where L10 forms an elongated spine to which 2 to 4 L12 dimers bind in a sequential fashion. Binds GTP-bound translation factors.

Functionally, forms part of the ribosomal stalk which helps the ribosome interact with GTP-bound translation factors. Is thus essential for accurate translation. The chain is Large ribosomal subunit protein bL12 from Mycobacterium leprae (strain TN).